The following is a 219-amino-acid chain: GTP cyclohydrolase 1 (219 aa).

Residues 1 to 37 (MDAVLKSLSVRLPDAADKRSDTGRPERVTERPTRQEA) are disordered. Over residues 14–37 (DAADKRSDTGRPERVTERPTRQEA) the composition is skewed to basic and acidic residues. Zn(2+) is bound by residues Cys108, His111, and Cys179.

The protein belongs to the GTP cyclohydrolase I family. In terms of assembly, homomer.

It carries out the reaction GTP + H2O = 7,8-dihydroneopterin 3'-triphosphate + formate + H(+). Its pathway is cofactor biosynthesis; 7,8-dihydroneopterin triphosphate biosynthesis; 7,8-dihydroneopterin triphosphate from GTP: step 1/1. The protein is GTP cyclohydrolase 1 of Methylobacterium sp. (strain 4-46).